The primary structure comprises 458 residues: Ribosomal protein uS12 methylthiotransferase RimO (458 aa).

Residues 26–136 (PRIGMVSLGC…VLDAVHGAVP (111 aa)) form the MTTase N-terminal domain. [4Fe-4S] cluster-binding residues include C35, C71, C100, C167, C171, and C174. The Radical SAM core domain maps to 153–389 (LTPRHYAYLK…MEKAQAISEA (237 aa)). The TRAM domain occupies 392-458 (QAKVGRTMQV…SEYDLWGKLT (67 aa)).

Belongs to the methylthiotransferase family. RimO subfamily. [4Fe-4S] cluster is required as a cofactor.

Its subcellular location is the cytoplasm. The catalysed reaction is L-aspartate(89)-[ribosomal protein uS12]-hydrogen + (sulfur carrier)-SH + AH2 + 2 S-adenosyl-L-methionine = 3-methylsulfanyl-L-aspartate(89)-[ribosomal protein uS12]-hydrogen + (sulfur carrier)-H + 5'-deoxyadenosine + L-methionine + A + S-adenosyl-L-homocysteine + 2 H(+). Its function is as follows. Catalyzes the methylthiolation of an aspartic acid residue of ribosomal protein uS12. The polypeptide is Ribosomal protein uS12 methylthiotransferase RimO (Jannaschia sp. (strain CCS1)).